The sequence spans 112 residues: Mu-ctenitoxin-Pn1a (112 aa).

An N-terminal signal peptide occupies residues 1–19; it reads MKLLGIFLVASFAFVLSFG. Residues 20 to 33 constitute a propeptide that is removed on maturation; it reads EEMIEGENPLEDQR. Disulfide bonds link cysteine 39–cysteine 56, cysteine 46–cysteine 62, cysteine 53–cysteine 85, cysteine 55–cysteine 73, cysteine 64–cysteine 71, cysteine 91–cysteine 106, and cysteine 102–cysteine 110. A Glycine amide modification is found at glycine 111.

This sequence belongs to the neurotoxin 04 (omega-agtx) family. 02 (Tx1) subfamily. In terms of processing, contains 7 disulfide bonds. In terms of tissue distribution, expressed by the venom gland.

It localises to the secreted. In terms of biological role, reversible inhibitor of neuronal sodium channels (Nav1.2/ SCN2A) that binds in proximity to site 1 and displays increasing affinity as the membrane potential is depolarized. Induces excitatory symptoms and spastic paralysis in mice. The polypeptide is Mu-ctenitoxin-Pn1a (Phoneutria nigriventer (Brazilian armed spider)).